A 228-amino-acid chain; its full sequence is Homeobox protein Hox-B6a (228 aa).

The Antp-type hexapeptide motif lies at 132 to 137; the sequence is VYPWMQ. Positions 150 to 209 form a DNA-binding region, homeobox; sequence GRRGRQTYTRYQTLELEKEFHFNRYLTRRRRIEIAHALCLTERQIKIWFQNRRMKWKKEN.

It belongs to the Antp homeobox family.

The protein resides in the nucleus. Functionally, sequence-specific transcription factor which is part of a developmental regulatory system that provides cells with specific positional identities on the anterior-posterior axis. The protein is Homeobox protein Hox-B6a (hoxb6a) of Danio rerio (Zebrafish).